Here is a 913-residue protein sequence, read N- to C-terminus: Anoctamin-5 (913 aa).

Residues 1 to 299 (MGDPDLLEVL…DLIKNYYGEK (299 aa)) are Cytoplasmic-facing. A helical membrane pass occupies residues 300-320 (IGIYFVFLGFYTEMLFFAAVV). Residues 321–380 (GLACFIYGLLSMEHNTSSTEICDPEIGGQMIMCPLCDQVCDYWRLNSTCLASKFSHLFDN) lie on the Extracellular side of the membrane. N335, N366, and N380 each carry an N-linked (GlcNAc...) asparagine glycan. Residues 381 to 401 (ESTVFFAIFMGIWVTLFLEFW) form a helical membrane-spanning segment. Residues 402 to 462 (KQRQARLEYE…YTRIPWYFLS (61 aa)) lie on the Cytoplasmic side of the membrane. Residues 463-483 (GATVTLWMSLVVTSMVAVIVY) form a helical membrane-spanning segment. Over 484–511 (RLSVFATFASFMESDASLKQVKSFLTPQ) the chain is Extracellular. Residues 512-532 (ITTSLTGSCLNFIVILILNFF) traverse the membrane as a helical segment. Over 533-557 (YEKISAWITKMEIPRTYQEYESSLT) the chain is Cytoplasmic. The chain crosses the membrane as a helical span at residues 558 to 578 (LKMFLFQFVNFYSSCFYVAFF). Residues 579–679 (KGKFVGYPGK…FYEYLETVTQ (101 aa)) lie on the Extracellular side of the membrane. The helical transmembrane segment at 680-700 (FGFVTLFVASFPLAPLLALIN) threads the bilayer. Residues 701-732 (NIVEIRVDAWKLTTQYRRTVASKAHSIGVWQD) are Cytoplasmic-facing. A helical transmembrane segment spans residues 733–753 (ILYGMAVLSVATNAFIVAFTS). The Extracellular segment spans residues 754 to 834 (DIIPRLVYYY…FWHVLAAKMT (81 aa)). N768, N778, and N791 each carry an N-linked (GlcNAc...) asparagine glycan. Residues 835 to 855 (FIIVMEHVVFLVKFLLAWMIP) traverse the membrane as a helical segment. Over 856–913 (DVPKDVVERIKREKLMTIKILHDFELNKLKENLGINSNEFAKHVMIEENKAQLAKSTL) the chain is Cytoplasmic.

The protein belongs to the anoctamin family. As to expression, highly expressed in brain, heart, kidney, lung, and skeletal muscle. Weakly expressed in bone marrow, fetal liver, placenta, spleen, thymus, osteoblasts and periodontal ligament cells.

The protein resides in the endoplasmic reticulum membrane. The protein localises to the cell membrane. Its function is as follows. Plays a role in plasma membrane repair in a process involving annexins. Does not exhibit calcium-activated chloride channel (CaCC) activity. The polypeptide is Anoctamin-5 (ANO5) (Homo sapiens (Human)).